The following is a 583-amino-acid chain: Multidrug transporter QDR2 (583 aa).

Positions 23 to 46 (EKYDGPDLSEVDSEDNDKMIKTNE) are disordered. N-linked (GlcNAc...) asparagine glycosylation occurs at Asn-60. The helical transmembrane segment at 88–108 (AYTGLFSTMAGAIYYPVLSVI) threads the bilayer. An N-linked (GlcNAc...) asparagine glycan is attached at Asn-120. The next 5 membrane-spanning stretches (helical) occupy residues 121–141 (ITVV…GGLA), 148–168 (PVVL…ACAQ), 178–198 (CLQA…IGDV), 208–228 (VGYI…IGAG), and 238–258 (IFWF…IMLP). N-linked (GlcNAc...) asparagine glycosylation is present at Asn-267. Transmembrane regions (helical) follow at residues 323–342 (ILLV…QTAL) and 354–374 (VAKI…SIVT). An N-linked (GlcNAc...) asparagine glycan is attached at Asn-380. The next 4 membrane-spanning stretches (helical) occupy residues 432–452 (HAAF…GWCI), 458–478 (LASV…ILTF), 493–513 (TATG…IGCL), and 524–544 (GVFT…FYLL).

The protein belongs to the major facilitator superfamily. CAR1 family.

Its subcellular location is the cell membrane. Multidrug resistance transporter involved in resistance to the antifungal drugs miconazole, tioconazole, clotrimazole, and ketoconazole; as well as to quinidine. Decreases the intracellular accumulation of clotrimazole in and plays a role in the extrusion of this antifungal from preloaded cells. This is Multidrug transporter QDR2 from Candida glabrata (strain ATCC 2001 / BCRC 20586 / JCM 3761 / NBRC 0622 / NRRL Y-65 / CBS 138) (Yeast).